A 199-amino-acid chain; its full sequence is CASP-like protein 4C1 (199 aa).

The Cytoplasmic portion of the chain corresponds to 1–35 (MESGSVANDSGPLNSTPDVHLYGKTAAMKQRRSNT). Residues 36–56 (MLFVFRLLTFSFSLAAVLVMG) form a helical membrane-spanning segment. Residues 57–80 (TNKQKIRSAPQYLEVAWHDFDPFR) lie on the Extracellular side of the membrane. Residues 81-101 (YVFAVNAIICVYSFVETWLAV) form a helical membrane-spanning segment. Over 102–124 (YTLSRGTLLLPETFQVWFDYGHD) the chain is Cytoplasmic. The chain crosses the membrane as a helical span at residues 125–145 (QGFACLLFSANSVGIAMAQLL). Residues 146–169 (QSGSTLIQGQYYCSDAGAYCTQAR) are Extracellular-facing. Residues 170–190 (VSIAMGFGAFLFLALSSFLTG) form a helical membrane-spanning segment. Topologically, residues 191–199 (LRVARWYLP) are cytoplasmic.

Belongs to the Casparian strip membrane proteins (CASP) family. In terms of assembly, homodimer and heterodimers.

The protein resides in the cell membrane. This chain is CASP-like protein 4C1, found in Physcomitrium patens (Spreading-leaved earth moss).